Consider the following 356-residue polypeptide: MRLNKMINNPLLTVKNLNKFFNEQQVLHDISFSLQRGEILFLLGSSGCGKTTLLRAIAGFEQPSNGEIWLKERLIFGENFNLPTQQRHLGYVVQEGVLFPHLNVYRNIAYGLGNGKGKNSEEKTRIEQIMQLTGIFELADRFPHQLSGGQQQRVALARALAPNPELILLDEPFSALDEHLRQQIRQEMLQALRQSGASAIFVTHDRDESLRYADKIAIIQQGKILQIDTPRTLYWSPNHLETAKFMGESIVLPANLLDENTAQCQLGNIPIKNKSISQNQGRILLRPEQFSLFKTSENPTALFNGQIKQIEFKGKITSIQIEINGYAIWIENVISPDLSIGDNLPVYLHRKGLFYS.

The 235-residue stretch at 12–246 (LTVKNLNKFF…PNHLETAKFM (235 aa)) folds into the ABC transporter domain. 44–51 (GSSGCGKT) lines the ATP pocket.

It belongs to the ABC transporter superfamily. Fe(3+) ion importer (TC 3.A.1.10) family. The complex is composed of two ATP-binding proteins (FbpC), two transmembrane proteins (FbpB) and a solute-binding protein (FbpA).

It localises to the cell inner membrane. The enzyme catalyses Fe(3+)(out) + ATP + H2O = Fe(3+)(in) + ADP + phosphate + H(+). Its function is as follows. Part of the ABC transporter complex FbpABC involved in Fe(3+) ions import. Responsible for energy coupling to the transport system. This chain is Fe(3+) ions import ATP-binding protein FbpC 2, found in Haemophilus influenzae (strain ATCC 51907 / DSM 11121 / KW20 / Rd).